The following is a 217-amino-acid chain: Small ribosomal subunit protein uS3 (217 aa).

Positions 38 to 106 (IRKYIDNALQ…KVHINVIEIK (69 aa)) constitute a KH type-2 domain.

Belongs to the universal ribosomal protein uS3 family. In terms of assembly, part of the 30S ribosomal subunit. Forms a tight complex with proteins S10 and S14.

Its function is as follows. Binds the lower part of the 30S subunit head. Binds mRNA in the 70S ribosome, positioning it for translation. This chain is Small ribosomal subunit protein uS3, found in Staphylococcus saprophyticus subsp. saprophyticus (strain ATCC 15305 / DSM 20229 / NCIMB 8711 / NCTC 7292 / S-41).